Reading from the N-terminus, the 210-residue chain is Proteasome subunit beta (210 aa).

The propeptide at Met-1 to Gly-9 is removed in mature form; by autocatalysis. Residue Thr-10 is the Nucleophile of the active site.

It belongs to the peptidase T1B family. The 20S proteasome core is composed of 14 alpha and 14 beta subunits that assemble into four stacked heptameric rings, resulting in a barrel-shaped structure. The two inner rings, each composed of seven catalytic beta subunits, are sandwiched by two outer rings, each composed of seven alpha subunits. The catalytic chamber with the active sites is on the inside of the barrel. Has a gated structure, the ends of the cylinder being occluded by the N-termini of the alpha-subunits. Is capped at one or both ends by the proteasome regulatory ATPase, PAN.

The protein localises to the cytoplasm. It catalyses the reaction Cleavage of peptide bonds with very broad specificity.. With respect to regulation, the formation of the proteasomal ATPase PAN-20S proteasome complex, via the docking of the C-termini of PAN into the intersubunit pockets in the alpha-rings, triggers opening of the gate for substrate entry. Interconversion between the open-gate and close-gate conformations leads to a dynamic regulation of the 20S proteasome proteolysis activity. Component of the proteasome core, a large protease complex with broad specificity involved in protein degradation. The chain is Proteasome subunit beta from Methanohalophilus mahii (strain ATCC 35705 / DSM 5219 / SLP).